Consider the following 318-residue polypeptide: Small ribosomal subunit protein uS2 (318 aa).

Belongs to the universal ribosomal protein uS2 family.

The sequence is that of Small ribosomal subunit protein uS2 from Mesomycoplasma hyopneumoniae (strain J / ATCC 25934 / NCTC 10110) (Mycoplasma hyopneumoniae).